The following is a 271-amino-acid chain: 2-aminophenol 1,6-dioxygenase alpha subunit (271 aa).

Belongs to the LigB/MhpB extradiol dioxygenase family. In terms of assembly, heterotetramer of 2 alpha and 2 beta subunits.

Functionally, component of the 2-aminophenol 1,6-dioxygenase complex that catalyzes the ring fission of 2-aminophenol to produce 2-aminomuconic 6-semialdehyde. AmnA seems to have a role in the stability of the complex. The protein is 2-aminophenol 1,6-dioxygenase alpha subunit (amnA) of Pseudomonas sp.